The following is a 239-amino-acid chain: Small ribosomal subunit protein eS4 (239 aa).

Residues 37–99 (IPLAVVIRDY…ADLYFRVIPD (63 aa)) enclose the S4 RNA-binding domain.

This sequence belongs to the eukaryotic ribosomal protein eS4 family.

This is Small ribosomal subunit protein eS4 from Saccharolobus islandicus (strain Y.N.15.51 / Yellowstone #2) (Sulfolobus islandicus).